The primary structure comprises 100 residues: NADH-quinone oxidoreductase subunit K (100 aa).

3 consecutive transmembrane segments (helical) span residues 4 to 24 (LSWYLLLSATLFSIGLIGFVI), 29 to 49 (IVMLMCLEIMFNAVNIAFASF), and 60 to 80 (IFVLFSIAVAACEAVIGLAIV).

Belongs to the complex I subunit 4L family. As to quaternary structure, NDH-1 is composed of 14 different subunits. Subunits NuoA, H, J, K, L, M, N constitute the membrane sector of the complex.

Its subcellular location is the cell inner membrane. It catalyses the reaction a quinone + NADH + 5 H(+)(in) = a quinol + NAD(+) + 4 H(+)(out). In terms of biological role, NDH-1 shuttles electrons from NADH, via FMN and iron-sulfur (Fe-S) centers, to quinones in the respiratory chain. The immediate electron acceptor for the enzyme in this species is believed to be ubiquinone. Couples the redox reaction to proton translocation (for every two electrons transferred, four hydrogen ions are translocated across the cytoplasmic membrane), and thus conserves the redox energy in a proton gradient. The polypeptide is NADH-quinone oxidoreductase subunit K (Thermodesulfovibrio yellowstonii (strain ATCC 51303 / DSM 11347 / YP87)).